Reading from the N-terminus, the 798-residue chain is Cation channel sperm-associated auxiliary subunit delta (798 aa).

The first 20 residues, 1–20, serve as a signal peptide directing secretion; sequence MLMLMLVAAVTMWLRPLVTA. At 21 to 723 the chain is on the extracellular side; sequence QLCRSRTVRT…AFPVQLVSAG (703 aa). 7 cysteine pairs are disulfide-bonded: Cys-23/Cys-369, Cys-59/Cys-145, Cys-144/Cys-152, Cys-387/Cys-496, Cys-510/Cys-701, Cys-525/Cys-572, and Cys-624/Cys-652. Asn-123 carries an N-linked (GlcNAc...) asparagine glycan. N-linked (GlcNAc...) asparagine glycosylation is found at Asn-230, Asn-240, Asn-472, Asn-538, and Asn-630. A helical membrane pass occupies residues 724 to 745; sequence VVILLIISSILGSVWLAYKTPK. The Cytoplasmic portion of the chain corresponds to 746–798; sequence LLRTARGRRIKKCATQLCRRCKTVCQFRASATARAGTEPPGRHRTPHGGRSDH.

Belongs to the CATSPERD family. As to quaternary structure, component of the CatSper complex or CatSpermasome composed of the core pore-forming members CATSPER1, CATSPER2, CATSPER3 and CATSPER4 as well as auxiliary members CATSPERB, CATSPERG, CATSPERD, CATSPERE, CATSPERZ, C2CD6/CATSPERT, TMEM249, TMEM262 and EFCAB9. HSPA1 may be an additional auxiliary complex member. The core complex members CATSPER1, CATSPER2, CATSPER3 and CATSPER4 form a heterotetrameric channel. The auxiliary CATSPERB, CATSPERG, CATSPERD and CATSPERE subunits form a pavilion-like structure over the pore which stabilizes the complex through interactions with CATSPER4, CATSPER3, CATSPER1 and CATSPER2 respectively. TMEM262/CATSPERH interacts with CATSPERB, further stabilizing the complex. C2CD6/CATSPERT interacts at least with CATSPERD and is required for targeting the CatSper complex in the flagellar membrane.

It is found in the cell projection. It localises to the cilium. Its subcellular location is the flagellum membrane. Its function is as follows. Auxiliary component of the CatSper complex, a complex involved in sperm cell hyperactivation. Sperm cell hyperactivation is needed for sperm motility which is essential late in the preparation of sperm for fertilization. Required for CATSPER1 stability before intraflagellar transport and/or incorporation of the CatSper complex channel into the flagellar membrane. The sequence is that of Cation channel sperm-associated auxiliary subunit delta from Homo sapiens (Human).